A 100-amino-acid chain; its full sequence is Integration host factor subunit alpha (100 aa).

This sequence belongs to the bacterial histone-like protein family. Heterodimer of an alpha and a beta chain.

Its function is as follows. This protein is one of the two subunits of integration host factor, a specific DNA-binding protein that functions in genetic recombination as well as in transcriptional and translational control. This is Integration host factor subunit alpha from Ruegeria pomeroyi (strain ATCC 700808 / DSM 15171 / DSS-3) (Silicibacter pomeroyi).